The following is a 445-amino-acid chain: tRNA modification GTPase MnmE (445 aa).

The (6S)-5-formyl-5,6,7,8-tetrahydrofolate site is built by arginine 20, glutamate 79, and lysine 119. A TrmE-type G domain is found at 215–371 (GLKLAIIGPP…ILKNIENIAE (157 aa)). Asparagine 225 lines the K(+) pocket. GTP-binding positions include 225 to 230 (NAGKSS), 244 to 250 (SNIAGTT), and 269 to 272 (DTAG). Serine 229 lines the Mg(2+) pocket. Serine 244, isoleucine 246, and threonine 249 together coordinate K(+). Threonine 250 contributes to the Mg(2+) binding site. Lysine 445 provides a ligand contact to (6S)-5-formyl-5,6,7,8-tetrahydrofolate.

It belongs to the TRAFAC class TrmE-Era-EngA-EngB-Septin-like GTPase superfamily. TrmE GTPase family. As to quaternary structure, homodimer. Heterotetramer of two MnmE and two MnmG subunits. Requires K(+) as cofactor.

Its subcellular location is the cytoplasm. Functionally, exhibits a very high intrinsic GTPase hydrolysis rate. Involved in the addition of a carboxymethylaminomethyl (cmnm) group at the wobble position (U34) of certain tRNAs, forming tRNA-cmnm(5)s(2)U34. The protein is tRNA modification GTPase MnmE of Rickettsia canadensis (strain McKiel).